The sequence spans 128 residues: UPF0102 protein Acry_2261 (128 aa).

Belongs to the UPF0102 family.

This Acidiphilium cryptum (strain JF-5) protein is UPF0102 protein Acry_2261.